Reading from the N-terminus, the 56-residue chain is U4-myrmicitoxin-Tb1a (56 aa).

Residues 1 to 26 (MQPSYLLLTFAIIFVMVIMYSPAVEA) form the signal peptide. Positions 27-40 (KAGADADADAHADA) are excised as a propeptide. G53 is modified (glycine amide).

Contains 1 disulfide bond. As to expression, expressed by the venom gland.

It localises to the secreted. In terms of biological role, venom protein with unknown function. Does not induce paralysis when a high dose is administered by intrathoracic injection into the blowfly Lucilia caesar. The protein is U4-myrmicitoxin-Tb1a of Tetramorium bicarinatum (Tramp ant).